The sequence spans 87 residues: uncharacterized protein (87 aa).

Residues 63 to 83 (IVLALVLGVFSLVGLIFIIYF) form a helical membrane-spanning segment.

The protein localises to the membrane. This is an uncharacterized protein from Dictyostelium discoideum (Social amoeba).